A 212-amino-acid polypeptide reads, in one-letter code: Putative 3-methyladenine DNA glycosylase (212 aa).

Belongs to the DNA glycosylase MPG family.

The chain is Putative 3-methyladenine DNA glycosylase from Frankia casuarinae (strain DSM 45818 / CECT 9043 / HFP020203 / CcI3).